We begin with the raw amino-acid sequence, 155 residues long: Small ribosomal subunit protein uS7cz/uS7cy (155 aa).

This sequence belongs to the universal ribosomal protein uS7 family. As to quaternary structure, part of the 30S ribosomal subunit.

It is found in the plastid. Its subcellular location is the chloroplast. Its function is as follows. One of the primary rRNA binding proteins, it binds directly to 16S rRNA where it nucleates assembly of the head domain of the 30S subunit. The sequence is that of Small ribosomal subunit protein uS7cz/uS7cy (rps7-A) from Daucus carota (Wild carrot).